We begin with the raw amino-acid sequence, 214 residues long: Adenylate kinase (214 aa).

An ATP-binding site is contributed by 10 to 15 (GAGKGT). Residues 30-59 (STGDMLRAAVKAGTPLGLEAKKVMDAGQLV) form an NMP region. AMP-binding positions include threonine 31, arginine 36, 57–59 (QLV), 85–88 (GFPR), and glutamine 92. An LID region spans residues 122–159 (GRRVHPGSGRVYHVVFNPPKVEGKDDVTGEDLAIRPDD). ATP contacts are provided by residues arginine 123 and 132-133 (VY). The AMP site is built by arginine 156 and arginine 167. ATP is bound at residue glutamine 200.

The protein belongs to the adenylate kinase family. Monomer.

The protein resides in the cytoplasm. It carries out the reaction AMP + ATP = 2 ADP. It participates in purine metabolism; AMP biosynthesis via salvage pathway; AMP from ADP: step 1/1. Catalyzes the reversible transfer of the terminal phosphate group between ATP and AMP. Plays an important role in cellular energy homeostasis and in adenine nucleotide metabolism. This is Adenylate kinase from Shewanella baltica (strain OS155 / ATCC BAA-1091).